Consider the following 113-residue polypeptide: RING-box protein 2 (113 aa).

The tract at residues 1–26 (MADVEDGEETCALASHSGSSGSKSGG) is disordered. A2 is modified (N-acetylalanine). T10 carries the post-translational modification Phosphothreonine; by CK2. Zn(2+) contacts are provided by C50, C53, C61, C64, C73, C80, H82, H85, C87, C88, C99, and C102. The RING-type zinc-finger motif lies at 61-103 (CLRCQAENKQEDCVVVWGECNHSFHNCCMSLWVKQNNRCPLCQ).

Belongs to the RING-box family. As to quaternary structure, catalytic component of multiple cullin-5-RING E3 ubiquitin-protein ligase complexes (ECS complexes, also named CRL5 complexes) composed of CUL5, Elongin BC (ELOB and ELOC), RNF7/RBX2 and a variable SOCS box domain-containing protein as substrate-specific recognition component. Also interacts (with lower preference) with CUL1, CUL2, CUL3, CUL4A and CUL4B; additional evidence is however required to confirm this result in vivo. Interacts with UBE2F. Interacts with CSNK2B, the interaction is not affected by phosphorylation by CK2. May also interact with DCUN1D1, DCUN1D2, DCUN1D3, DCUN1D4 and DCUN1D5. In terms of assembly, (Microbial infection) Following infection by HIV-1 virus, component of a cullin-5-RING E3 ubiquitin-protein ligase complex (ECS complex) hijacked by the HIV-1 Vif protein. In terms of processing, phosphorylation at Thr-10 by CK2 promotes its degradation by the proteasome. As to expression, expressed in heart, liver, skeletal muscle and pancreas. At very low levels expressed in brain, placenta and lung.

The protein resides in the cytoplasm. The protein localises to the nucleus. It carries out the reaction S-ubiquitinyl-[E2 ubiquitin-conjugating enzyme]-L-cysteine + [acceptor protein]-L-lysine = [E2 ubiquitin-conjugating enzyme]-L-cysteine + N(6)-ubiquitinyl-[acceptor protein]-L-lysine.. The catalysed reaction is S-[NEDD8-protein]-yl-[E2 NEDD8-conjugating enzyme]-L-cysteine + [cullin]-L-lysine = [E2 NEDD8-conjugating enzyme]-L-cysteine + N(6)-[NEDD8-protein]-yl-[cullin]-L-lysine.. It participates in protein modification; protein ubiquitination. It functions in the pathway protein modification; protein neddylation. Its function is as follows. Catalytic component of multiple cullin-5-RING E3 ubiquitin-protein ligase complexes (ECS complexes), which mediate the ubiquitination and subsequent proteasomal degradation of target proteins. It is thereby involved in various biological processes, such as cell cycle progression, signal transduction and transcription. The functional specificity of the E3 ubiquitin-protein ligase ECS complexes depend on the variable SOCS box-containing substrate recognition component. Within ECS complexes, RNF7/RBX2 recruits the E2 ubiquitination enzyme to the complex via its RING-type and brings it into close proximity to the substrate. Catalytic subunit of various SOCS-containing ECS complexes, such as the ECS(SOCS7) complex, that regulate reelin signaling by mediating ubiquitination and degradation of DAB1. The ECS(SOCS2) complex mediates the ubiquitination and subsequent proteasomal degradation of phosphorylated EPOR and GHR. Promotes ubiquitination and degradation of NF1, thereby regulating Ras protein signal transduction. As part of the ECS(ASB9) complex, catalyzes ubiquitination and degradation of CKB. The ECS(SPSB3) complex catalyzes ubiquitination of nuclear CGAS. As part of the ECS(RAB40C) complex, mediates ANKRD28 ubiquitination and degradation, thereby inhibiting protein phosphatase 6 (PP6) complex activity and focal adhesion assembly during cell migration. As part of some ECS complex, catalyzes 'Lys-11'-linked ubiquitination and degradation of BTRC. ECS complexes and ARIH2 collaborate in tandem to mediate ubiquitination of target proteins; ARIH2 mediating addition of the first ubiquitin on CRLs targets. Specifically catalyzes the neddylation of CUL5 via its interaction with UBE2F. Does not catalyze neddylation of other cullins (CUL1, CUL2, CUL3, CUL4A or CUL4B). May play a role in protecting cells from apoptosis induced by redox agents. Functionally, inactive. In terms of biological role, (Microbial infection) Following infection by HIV-1 virus, catalytic component of a cullin-5-RING E3 ubiquitin-protein ligase complex (ECS complex) hijacked by the HIV-1 Vif protein, which catalyzes ubiquitination and degradation of APOBEC3F and APOBEC3G. The protein is RING-box protein 2 of Homo sapiens (Human).